A 170-amino-acid polypeptide reads, in one-letter code: Ribosome maturation factor RimM (170 aa).

A PRC barrel domain is found at 93–165 (PDEFHDHELI…RVVIDPPPGL (73 aa)).

Belongs to the RimM family. In terms of assembly, binds ribosomal protein uS19.

Its subcellular location is the cytoplasm. In terms of biological role, an accessory protein needed during the final step in the assembly of 30S ribosomal subunit, possibly for assembly of the head region. Essential for efficient processing of 16S rRNA. May be needed both before and after RbfA during the maturation of 16S rRNA. It has affinity for free ribosomal 30S subunits but not for 70S ribosomes. The sequence is that of Ribosome maturation factor RimM from Thermobifida fusca (strain YX).